We begin with the raw amino-acid sequence, 85 residues long: UPF0473 protein CLK_1946 (85 aa).

This sequence belongs to the UPF0473 family.

This chain is UPF0473 protein CLK_1946, found in Clostridium botulinum (strain Loch Maree / Type A3).